A 558-amino-acid chain; its full sequence is uncharacterized protein (558 aa).

The span at 338–354 (STSTSTSTSTSSSNDLN) shows a compositional bias: low complexity. The disordered stretch occupies residues 338-380 (STSTSTSTSTSSSNDLNLDSDSDDSDSDDSDSDSDSDSDSEID). Residues 355–380 (LDSDSDDSDSDDSDSDSDSDSDSEID) show a composition bias toward acidic residues.

The protein resides in the plastid. This is an uncharacterized protein from Euglena longa (Euglenophycean alga).